We begin with the raw amino-acid sequence, 718 residues long: Sodium/myo-inositol cotransporter (718 aa).

Topologically, residues 1–9 (MRAVLETAD) are extracellular. The chain crosses the membrane as a helical span at residues 10 to 29 (IAIVALYFILVMCIGFFAMW). The Cytoplasmic segment spans residues 30–38 (KSNRSTVSG). The helical transmembrane segment at 39–57 (YFLAGRSMTWVAIGASLFV) threads the bilayer. At 58–86 (SNIGSEHFIGLAGSGAASGFAVGAWEFNA) the chain is on the extracellular side. A helical membrane pass occupies residues 87 to 110 (LLLLQLLGWVFIPIYIRSGVYTMP). At 111–123 (EYLSKRFGGHRIQ) the chain is on the cytoplasmic side. The chain crosses the membrane as a helical span at residues 124–144 (VYFAALSLILYIFTKLSVDLY). Residues 145 to 157 (SGALFIQESMGWN) lie on the Extracellular side of the membrane. A helical membrane pass occupies residues 158-183 (LYVSVILLIGMTALLTVTGGLVAVIY). The Cytoplasmic portion of the chain corresponds to 184–186 (TDT). Residues 187 to 205 (LQALLMIVGALTLMVISMM) traverse the membrane as a helical segment. The Extracellular segment spans residues 206–303 (EIGGFEEVKR…HAKGSTLMAG (98 aa)). N-linked (GlcNAc...) asparagine glycosylation is present at Asn-232. Residues 304–324 (FLKLLPMFIIVVPGMISRILF) form a helical membrane-spanning segment. The Cytoplasmic portion of the chain corresponds to 325–353 (ADDIACINPEHCMQVCGSRAGCSNIAYPR). Residues 354 to 376 (LVMKLVPVGLRGLMMAVMIAALM) form a helical membrane-spanning segment. The Extracellular portion of the chain corresponds to 377-406 (SDLDSIFNSASTIFTLDVYKLIRKSASSRE). A helical membrane pass occupies residues 407-430 (LMIVGRIFVAFMVVISIAWVPIIV). Residues 431 to 443 (EMQGGQMYLYIQE) are Cytoplasmic-facing. A helical membrane pass occupies residues 444–462 (VADYLTPPVAALFLLAIFW). Topologically, residues 463–510 (KRCNEQGAFYGGMAGFILVVVRLTLAFAYRAPECDQPDNRPVFIKDIH) are extracellular. A helical transmembrane segment spans residues 511-532 (YMYVATALFWITGLITVIVSLL). The Cytoplasmic segment spans residues 533–695 (TPPPTKEQIR…QMLEEPPQVK (163 aa)). Phosphoserine is present on residues Ser-594 and Ser-632. A helical membrane pass occupies residues 696–716 (VILNIGLFGVCSLGIFMFVYF). Residues 717–718 (SL) lie on the Extracellular side of the membrane.

This sequence belongs to the sodium:solute symporter (SSF) (TC 2.A.21) family. As to quaternary structure, interacts with KCNQ2 (via the pore module). Interacts with KCNQ1; this interaction is direct. Forms coregulatory complexes with ion channels KCNQ2-KCNQ3 and KCNQ1-KCNE2.

It localises to the apical cell membrane. The protein resides in the basolateral cell membrane. Electrogenic Na(+)-coupled sugar symporter that actively transports myo-inositol and its stereoisomer scyllo-inositol across the plasma membrane, with a Na(+) to sugar coupling ratio of 2:1. Maintains myo-inositol concentration gradient that defines cell volume and fluid balance during osmotic stress, in particular in the fetoplacental unit and central nervous system. Forms coregulatory complexes with voltage-gated K(+) ion channels, allosterically altering ion selectivity, voltage dependence and gating kinetics of the channel. In turn, K(+) efflux through the channel forms a local electrical gradient that modulates electrogenic Na(+)-coupled myo-inositol influx through the transporter. Associates with KCNQ1-KCNE2 channel in the apical membrane of choroid plexus epithelium and regulates the myo-inositol gradient between blood and cerebrospinal fluid with an impact on neuron excitability. Associates with KCNQ2-KCNQ3 channel altering ion selectivity, increasing Na(+) and Cs(+) permeation relative to K(+) permeation. Provides myo-inositol precursor for biosynthesis of phosphoinositides such as PI(4,5)P2, thus indirectly affecting the activity of phosphoinositide-dependent ion channels and Ca(2+) signaling upon osmotic stress. This chain is Sodium/myo-inositol cotransporter (SLC5A3), found in Bos taurus (Bovine).